The primary structure comprises 648 residues: Serine/threonine-protein kinase plk-1 (648 aa).

The segment at 1–24 (MNRLPNIAKPPQKSNQRKEKAPPE) is disordered. One can recognise a Protein kinase domain in the interval 38-289 (YEKGRFLGKG…AKQVQRDGFF (252 aa)). ATP contacts are provided by residues 44–52 (LGKGGFAHC) and Lys-67. Asp-161 acts as the Proton acceptor in catalysis. 2 consecutive POLO box domains span residues 412-492 (WISK…YMND) and 514-596 (TLRV…RLMS). Low complexity predominate over residues 612–629 (PRSMAAARSASAGSRGPN).

It belongs to the protein kinase superfamily. Ser/Thr protein kinase family. CDC5/Polo subfamily. Interacts with mex-5, mex-6 and spat-1. As to expression, embryos.

It localises to the cytoplasm. The protein resides in the cytoskeleton. It is found in the microtubule organizing center. The protein localises to the centrosome. Its subcellular location is the midbody. It localises to the nucleus. The protein resides in the chromosome. It is found in the centromere. The protein localises to the kinetochore. It catalyses the reaction L-seryl-[protein] + ATP = O-phospho-L-seryl-[protein] + ADP + H(+). It carries out the reaction L-threonyl-[protein] + ATP = O-phospho-L-threonyl-[protein] + ADP + H(+). Required for oocyte nuclear envelope breakdown before entry of oocyte into spermatheca. In meiotic cells, required for spindle dynamics and probably for spindle attachment to the chromosomes. Zygotic role in the development of the germline and nerve cord. In mitotic cells, plays a role in spindle organization and centrosome maturation. Involved in asymmetric nuclear localization of cdc-25.1 during embryogenesis which affects cell division timing. Together with plk-2, regulates cytoplasm polarity in early embryos. May play a minor role in chromosome pairing and synapsis during oocyte meiosis I. This Caenorhabditis elegans protein is Serine/threonine-protein kinase plk-1 (plk-1).